A 283-amino-acid chain; its full sequence is Release factor glutamine methyltransferase (283 aa).

S-adenosyl-L-methionine is bound by residues 121–125 (GTGSG), Asp144, and Asn188. Substrate is bound at residue 188-191 (NPPY).

It belongs to the protein N5-glutamine methyltransferase family. PrmC subfamily.

It catalyses the reaction L-glutaminyl-[peptide chain release factor] + S-adenosyl-L-methionine = N(5)-methyl-L-glutaminyl-[peptide chain release factor] + S-adenosyl-L-homocysteine + H(+). Methylates the class 1 translation termination release factors RF1/PrfA and RF2/PrfB on the glutamine residue of the universally conserved GGQ motif. The sequence is that of Release factor glutamine methyltransferase from Bacillus anthracis.